The following is a 260-amino-acid chain: Histidine-binding periplasmic protein (260 aa).

Positions 1-22 are cleaved as a signal peptide; sequence MKKLALSLSLVLAFSSATAAFA. Residues cysteine 60 and cysteine 67 are joined by a disulfide bond. L-histidine is bound by residues serine 91, serine 92, serine 94, arginine 99, threonine 143, and aspartate 183.

The protein belongs to the bacterial solute-binding protein 3 family. The complex is composed of two ATP-binding proteins (HisP), two transmembrane proteins (HisM and HisQ) and a solute-binding protein (HisJ).

It is found in the periplasm. Functionally, part of the ABC transporter complex HisPMQJ involved in histidine transport. Binds histidine. Interacts with HisQMP and stimulates ATPase activity of HisP, which results in histidine translocation. May have some additional function(s) in translocation that is independent of the stimulation of ATP hydrolysis. The protein is Histidine-binding periplasmic protein of Salmonella typhimurium (strain LT2 / SGSC1412 / ATCC 700720).